A 335-amino-acid polypeptide reads, in one-letter code: Methionine aminopeptidase 1D, mitochondrial (335 aa).

The transit peptide at 1 to 19 (MAAPIGVPLLVRGGCQRIL) directs the protein to the mitochondrion. Residue His161 coordinates substrate. Residues Asp178, Asp189, and His252 each contribute to the a divalent metal cation site. His259 provides a ligand contact to substrate. 2 residues coordinate a divalent metal cation: Glu284 and Glu315.

Belongs to the peptidase M24A family. Methionine aminopeptidase type 1 subfamily. Co(2+) serves as cofactor. Zn(2+) is required as a cofactor. Requires Mn(2+) as cofactor. The cofactor is Fe(2+).

It is found in the mitochondrion. The catalysed reaction is Release of N-terminal amino acids, preferentially methionine, from peptides and arylamides.. Its function is as follows. Removes the N-terminal methionine from nascent proteins. The N-terminal methionine is often cleaved when the second residue in the primary sequence is small and uncharged (Met-Ala-, Cys, Gly, Pro, Ser, Thr, or Val). Requires deformylation of the N(alpha)-formylated initiator methionine before it can be hydrolyzed. The chain is Methionine aminopeptidase 1D, mitochondrial (Metap1d) from Mus musculus (Mouse).